The chain runs to 321 residues: MNSENSFSSSEHITVLLHEAVNGLALKENGIYIDGTFGRGGHSRFILSQLSSNGRLIAVDRDPRAIAEAHKIQDLRFQIEHNSFSHIPEICDKLNLVGKIDGILLDLGVSSPQLDEAERGFSFMKDGPLDMRMDTTQGLSAEEWLKQVSIEDLTWVLKTFGEERFAKRIATAIVDFNKSAVKNSTEFLSRTSQLAELISQAVPFKDKHKHPATRSFQAIRIFINSELDELESLLNSALDMLAPEGRLSIISFHSLEDRMVKHFMKKQSKGEDIPKGLPLREDQIQRNQKLRIIGKAIQPSDAEIQANPRSRSAILRVAERI.

S-adenosyl-L-methionine is bound by residues 40–42 (GGH), Asp60, Phe84, Asp106, and Gln113.

It belongs to the methyltransferase superfamily. RsmH family.

It localises to the cytoplasm. The catalysed reaction is cytidine(1402) in 16S rRNA + S-adenosyl-L-methionine = N(4)-methylcytidine(1402) in 16S rRNA + S-adenosyl-L-homocysteine + H(+). Specifically methylates the N4 position of cytidine in position 1402 (C1402) of 16S rRNA. The sequence is that of Ribosomal RNA small subunit methyltransferase H from Haemophilus influenzae (strain PittEE).